Here is a 483-residue protein sequence, read N- to C-terminus: FAD-linked oxidoreductase easE (483 aa).

One can recognise an FAD-binding PCMH-type domain in the interval 10–193 (QGRLPFYSAV…TEATVRVFSD (184 aa)).

The protein belongs to the oxygen-dependent FAD-linked oxidoreductase family. It depends on FAD as a cofactor.

The protein operates within alkaloid biosynthesis; ergot alkaloid biosynthesis. In terms of biological role, FAD-linked oxidoreductase; part of the gene cluster that mediates the biosynthesis of fungal ergot alkaloid. DmaW catalyzes the first step of ergot alkaloid biosynthesis by condensing dimethylallyl diphosphate (DMAP) and tryptophan to form 4-dimethylallyl-L-tryptophan. The second step is catalyzed by the methyltransferase easF that methylates 4-dimethylallyl-L-tryptophan in the presence of S-adenosyl-L-methionine, resulting in the formation of 4-dimethylallyl-L-abrine. The catalase easC and the FAD-dependent oxidoreductase easE then transform 4-dimethylallyl-L-abrine to chanoclavine-I which is further oxidized by easD in the presence of NAD(+), resulting in the formation of chanoclavine-I aldehyde. Agroclavine dehydrogenase easG then mediates the conversion of chanoclavine-I aldehyde to agroclavine via a non-enzymatic adduct reaction: the substrate is an iminium intermediate that is formed spontaneously from chanoclavine-I aldehyde in the presence of glutathione. The presence of easA is not required to complete this reaction. Further conversion of agroclavine to paspalic acid is a two-step process involving oxidation of agroclavine to elymoclavine and of elymoclavine to paspalic acid, the second step being performed by the elymoclavine oxidase cloA. Paspalic acid is then further converted to D-lysergic acid. Ergopeptines are assembled from D-lysergic acid and three different amino acids by the D-lysergyl-peptide-synthetases composed each of a monomudular and a trimodular nonribosomal peptide synthetase subunit. LpsB and lpsC encode the monomodular subunits responsible for D-lysergic acid activation and incorporation into the ergopeptine backbone. LpsA1 and A2 subunits encode the trimodular nonribosomal peptide synthetase assembling the tripeptide portion of ergopeptines. LpsA1 is responsible for formation of the major ergopeptine, ergotamine, and lpsA2 for alpha-ergocryptine, the minor ergopeptine of the total alkaloid mixture elaborated by C.purpurea. D-lysergyl-tripeptides are assembled by the nonribosomal peptide synthetases and released as N-(D-lysergyl-aminoacyl)-lactams. Cyclolization of the D-lysergyl-tripeptides is performed by the Fe(2+)/2-ketoglutarate-dependent dioxygenase easH which introduces a hydroxyl group into N-(D-lysergyl-aminoacyl)-lactam at alpha-C of the aminoacyl residue followed by spontaneous condensation with the terminal lactam carbonyl group. The chain is FAD-linked oxidoreductase easE from Claviceps purpurea (strain 20.1) (Ergot fungus).